The sequence spans 179 residues: Protein GrpE (179 aa).

A disordered region spans residues 1–22 (MTDNNIENNEEEIRKAPSANDR). Basic and acidic residues predominate over residues 11-22 (EEIRKAPSANDR).

Belongs to the GrpE family. In terms of assembly, homodimer.

Its subcellular location is the cytoplasm. Functionally, participates actively in the response to hyperosmotic and heat shock by preventing the aggregation of stress-denatured proteins, in association with DnaK and GrpE. It is the nucleotide exchange factor for DnaK and may function as a thermosensor. Unfolded proteins bind initially to DnaJ; upon interaction with the DnaJ-bound protein, DnaK hydrolyzes its bound ATP, resulting in the formation of a stable complex. GrpE releases ADP from DnaK; ATP binding to DnaK triggers the release of the substrate protein, thus completing the reaction cycle. Several rounds of ATP-dependent interactions between DnaJ, DnaK and GrpE are required for fully efficient folding. This Rickettsia canadensis (strain McKiel) protein is Protein GrpE.